The primary structure comprises 108 residues: MAVQAYRSLKKYETFSYLPQMTPEQVRRQIAHAIAQGWNPAVEHTEKGTPAKASYWYMWKLPLFGEQSVDAVVAEIEACHREFPDQMVRFVAYDNYAQSQGMAFVVYR.

The protein belongs to the RuBisCO small chain family. Heterohexadecamer of 8 large and 8 small subunits.

In terms of biological role, ruBisCO catalyzes two reactions: the carboxylation of D-ribulose 1,5-bisphosphate, the primary event in carbon dioxide fixation, as well as the oxidative fragmentation of the pentose substrate. Both reactions occur simultaneously and in competition at the same active site. Although the small subunit is not catalytic it is essential for maximal activity. This is Ribulose bisphosphate carboxylase small subunit from Nitrobacter vulgaris.